We begin with the raw amino-acid sequence, 650 residues long: 1-deoxy-D-xylulose-5-phosphate synthase (650 aa).

Thiamine diphosphate is bound by residues His73 and 113–115 (SHA). Asp145 is a binding site for Mg(2+). Residues 146–147 (GA), Asn175, Tyr287, and Glu369 contribute to the thiamine diphosphate site. Asn175 contacts Mg(2+).

Belongs to the transketolase family. DXPS subfamily. Homodimer. Requires Mg(2+) as cofactor. Thiamine diphosphate is required as a cofactor.

It catalyses the reaction D-glyceraldehyde 3-phosphate + pyruvate + H(+) = 1-deoxy-D-xylulose 5-phosphate + CO2. Its pathway is metabolic intermediate biosynthesis; 1-deoxy-D-xylulose 5-phosphate biosynthesis; 1-deoxy-D-xylulose 5-phosphate from D-glyceraldehyde 3-phosphate and pyruvate: step 1/1. Its function is as follows. Catalyzes the acyloin condensation reaction between C atoms 2 and 3 of pyruvate and glyceraldehyde 3-phosphate to yield 1-deoxy-D-xylulose-5-phosphate (DXP). The protein is 1-deoxy-D-xylulose-5-phosphate synthase of Leifsonia xyli subsp. xyli (strain CTCB07).